The chain runs to 184 residues: Probable cobalt-precorrin-6B C(15)-methyltransferase (decarboxylating) (184 aa).

Residues threonine 12, 36-40 (GCGTG), aspartate 59, and alanine 87 contribute to the S-adenosyl-L-methionine site.

It belongs to the methyltransferase superfamily. Archaeal-type CbiT family.

It carries out the reaction Co-precorrin-6B + S-adenosyl-L-methionine = Co-precorrin-7 + S-adenosyl-L-homocysteine + CO2. It functions in the pathway cofactor biosynthesis; adenosylcobalamin biosynthesis; cob(II)yrinate a,c-diamide from sirohydrochlorin (anaerobic route): step 8/10. Catalyzes the methylation of C-15 in cobalt-precorrin-6B followed by the decarboxylation of C-12 to form cobalt-precorrin-7. In Methanosarcina mazei (strain ATCC BAA-159 / DSM 3647 / Goe1 / Go1 / JCM 11833 / OCM 88) (Methanosarcina frisia), this protein is Probable cobalt-precorrin-6B C(15)-methyltransferase (decarboxylating).